We begin with the raw amino-acid sequence, 125 residues long: Multifunctional methyltransferase subunit TRM112-like protein (125 aa).

Positions Lys2–Asn119 constitute a TRM112 domain.

Belongs to the TRM112 family. As to quaternary structure, part of the heterodimeric BUD23-TRM112 methyltransferase complex; this heterodimerization is necessary for the metabolic stability and activity of the catalytic subunit BUD23. Part of the heterodimeric N6AMT1-TRM112 methyltransferase complex; this heterodimerization is necessary for S-adenosyl-L-methionine-binding to N6AMT1/HEMK2. Part of the heterodimeric ALKBH8-TRM112 methyltransferase complex. Part of the heterodimeric METTL5-TRM112 methyltransferase complex; this heterodimerization is necessary for the stability of the catalytic subunit METTL5. Part of the heterodimeric THUMPD3-TRM112 methyltransferase complex; this complex forms an active tRNA methyltransferase, where TRMT112 acts as an activator of the catalytic subunit THUMPD3. Part of the heterodimeric THUMPD2-TRM112 methyltransferase complex; this complex forms an active tRNA methyltransferase, where TRMT112 acts as an activator of the catalytic subunit THUMPD2. Part of the heterodimeric TRMT11-TRM112 methyltransferase complex; this complex forms an active tRNA methyltransferase, where TRMT112 acts as an activator of the catalytic subunit TRMT11. Abundantly expressed in the testis, also expressed in the brain, heart, kidney, liver, lung, muscle and spleen.

It localises to the nucleus. Its subcellular location is the nucleoplasm. The protein resides in the cytoplasm. The protein localises to the perinuclear region. Its function is as follows. Acts as an activator of both rRNA/tRNA and protein methyltransferases. Together with methyltransferase BUD23, methylates the N(7) position of a guanine in 18S rRNA. The heterodimer with HEMK2/N6AMT1 catalyzes N5-methylation of ETF1 on 'Gln-185', using S-adenosyl L-methionine as methyl donor. The heterodimer with ALKBH8 catalyzes the methylation of 5-carboxymethyl uridine to 5-methylcarboxymethyl uridine at the wobble position of the anticodon loop in target tRNA species. Together with methyltransferase THUMPD3, catalyzes the formation of N(2)-methylguanosine at position 6 in a broad range of tRNA substrates and at position 7 of tRNA(Trp). Involved in the pre-rRNA processing steps leading to small-subunit rRNA production. Together with methyltransferase METTL5, specifically methylates the 6th position of adenine in position 1832 of 18S rRNA. This Mus musculus (Mouse) protein is Multifunctional methyltransferase subunit TRM112-like protein (Trmt112).